A 538-amino-acid chain; its full sequence is Chaperonin GroEL 1 (538 aa).

ATP-binding positions include 29-32, 86-90, glycine 413, and aspartate 494; these read TLGP and DGTTT.

This sequence belongs to the chaperonin (HSP60) family. As to quaternary structure, forms a cylinder of 14 subunits composed of two heptameric rings stacked back-to-back. Interacts with the co-chaperonin GroES.

Its subcellular location is the cytoplasm. It catalyses the reaction ATP + H2O + a folded polypeptide = ADP + phosphate + an unfolded polypeptide.. Its function is as follows. Together with its co-chaperonin GroES, plays an essential role in assisting protein folding. The GroEL-GroES system forms a nano-cage that allows encapsulation of the non-native substrate proteins and provides a physical environment optimized to promote and accelerate protein folding. This chain is Chaperonin GroEL 1, found in Mycolicibacterium paratuberculosis (strain ATCC BAA-968 / K-10) (Mycobacterium paratuberculosis).